The sequence spans 738 residues: Alcohol dehydrogenase (quinone), dehydrogenase subunit (738 aa).

A signal peptide spans 1-35 (MISAVFGKRRSLSRTLTAGTICAALISGYATMASA). Residue E97 participates in pyrroloquinoline quinone binding. C143 and C144 are oxidised to a cystine. R149 is a pyrroloquinoline quinone binding site. E217 serves as a coordination point for Ca(2+). T278 contacts pyrroloquinoline quinone. Positions 298 and 343 each coordinate Ca(2+). D343 serves as the catalytic Proton acceptor. 2 residues coordinate pyrroloquinoline quinone: K370 and I584. The 105-residue stretch at 634–738 (FDSKRTDNGY…NADGIPEQLP (105 aa)) folds into the Cytochrome c domain. Residues C650, C653, H654, and M693 each coordinate heme c.

It belongs to the bacterial PQQ dehydrogenase family. The alcohol dehydrogenase multicomponent enzyme system is composed of a dehydrogenase subunit I (AdhA) and a cytochrome c subunit II (AdhB). Requires pyrroloquinoline quinone as cofactor. Ca(2+) is required as a cofactor. It depends on heme c as a cofactor.

Its subcellular location is the cell membrane. The enzyme catalyses ethanol + a ubiquinone = a ubiquinol + acetaldehyde. Functionally, dehydrogenase component of the alcohol dehydrogenase multicomponent enzyme system which is involved in the production of acetic acid and in the ethanol oxidase respiratory chain. Quinohemoprotein alcohol dehydrogenase (ADH) catalyzes the oxidation of ethanol to acetaldehyde by transferring electrons to the ubiquinone embedded in the membrane phospholipids. The electrons transfer from ethanol to membranous ubiquinone occurs from pyrroloquinoline quinone (PQQ) to one heme c in subunit I (AdhA), and finally to two heme c in subunit II (AdhB). Besides ubiquinone reduction, ADH also has a ubiquinol (QH2) oxidation reaction which mediates electron transfer from ubiquinol to the non-energy generating bypass oxidase system. The electrons transfer occurs from ubiquinol (QH2) to the additional heme c within subunit II (AdhB). The chain is Alcohol dehydrogenase (quinone), dehydrogenase subunit (adhA) from Gluconacetobacter polyoxogenes (Acetobacter polyoxogenes).